The chain runs to 119 residues: Small ribosomal subunit protein bS6 (119 aa).

This sequence belongs to the bacterial ribosomal protein bS6 family.

Functionally, binds together with bS18 to 16S ribosomal RNA. This Thermosipho africanus (strain TCF52B) protein is Small ribosomal subunit protein bS6.